Consider the following 184-residue polypeptide: Large ribosomal subunit protein uL6 (184 aa).

This sequence belongs to the universal ribosomal protein uL6 family. As to quaternary structure, part of the 50S ribosomal subunit.

In terms of biological role, this protein binds to the 23S rRNA, and is important in its secondary structure. It is located near the subunit interface in the base of the L7/L12 stalk, and near the tRNA binding site of the peptidyltransferase center. This Mycoplasma pneumoniae (strain ATCC 29342 / M129 / Subtype 1) (Mycoplasmoides pneumoniae) protein is Large ribosomal subunit protein uL6.